Here is a 457-residue protein sequence, read N- to C-terminus: Peptidyl-prolyl cis-trans isomerase FKBP5 (457 aa).

At Met1 the chain carries N-acetylmethionine. The span at 1–11 shows a compositional bias: basic and acidic residues; sequence MTTDEGAKNNE. The tract at residues 1 to 24 is disordered; sequence MTTDEGAKNNEESPTATVAEQGED. Ser13 is modified (phosphoserine). At Lys28 the chain carries N6-acetyllysine. The region spanning 42–130 is the PPIase FKBP-type 1 domain; sequence NGEETPMIGD…KIPSNATLFF (89 aa). Residue Lys155 is modified to N6-acetyllysine. The region spanning 157-243 is the PPIase FKBP-type 2 domain; the sequence is EGYSNPNEGA…GIEPNAELIY (87 aa). 3 TPR repeats span residues 268 to 301, 317 to 350, and 351 to 384; these read AAIV…LEME, LAAF…DSAN, and EKGL…NPQN. Residues 420–457 form a disordered region; sequence DAKEEANKAMGKKTSEGVTNEKGTDSQAMEEEKPEGHV. Ser445 carries the phosphoserine modification.

Part of a heteromultimeric cytoplasmic complex with HSP90AA1, HSPA1A/HSPA1B and steroid receptors. Upon ligand binding dissociates from the complex and FKBP4 takes its place. Interacts with functionally mature heterooligomeric progesterone receptor complexes along with HSP90 and TEBP. Interacts with NR3C1. Interacts with Akt/AKT1 and PHLPP1; enhancing dephosphorylation and subsequent activation of Akt/AKT1. Interacts with IFI44L; this interaction modulates the kinase activity of IKBKB and IKBKE. Interacts with IKBKB and IKBKE. Acetylation impairs ability to promote interaction between Akt/AKT1 and PHLPP1. Deacetylation by SIRT7 promotes interaction between Akt/AKT1 and PHLPP1, leading to suppress Akt/AKT1 activation. In terms of processing, ubiquitinated, leading to degradation in a proteasome-dependent manner. Deubiquitinated by USP49, leading to stabilization. Widely expressed, enriched in testis compared to other tissues.

It localises to the cytoplasm. Its subcellular location is the nucleus. It carries out the reaction [protein]-peptidylproline (omega=180) = [protein]-peptidylproline (omega=0). Inhibited by both FK506 and rapamycin. Functionally, immunophilin protein with PPIase and co-chaperone activities. Component of unligated steroid receptors heterocomplexes through interaction with heat-shock protein 90 (HSP90). Plays a role in the intracellular trafficking of heterooligomeric forms of steroid hormone receptors maintaining the complex into the cytoplasm when unliganded. Acts as a regulator of Akt/AKT1 activity by promoting the interaction between Akt/AKT1 and PHLPP1, thereby enhancing dephosphorylation and subsequent activation of Akt/AKT1. Interacts with IKBKE and IKBKB which facilitates IKK complex assembly leading to increased IKBKE and IKBKB kinase activity, NF-kappa-B activation, and IFN production. This Homo sapiens (Human) protein is Peptidyl-prolyl cis-trans isomerase FKBP5 (FKBP5).